The sequence spans 198 residues: MHYPEPISKLIDSFMKLPGIGPKTAVRLAFFVLDMKEDDVLGFAKALVNAKRDLAYCSVCGHITDRDPCYICNDSHRDQSVVCVVQEPKDVIAMEKMKEYQGVYHVLRGAISPMGGIGPEDINIPQLLKRLHDETVQEVILATNPNIEGEATAMYISRLLKPTGIKVTRIAHGLPVGGDLEYADEVTLSKALEGRREV.

The C4-type zinc-finger motif lies at 57 to 72; it reads CSVCGHITDRDPCYIC. A Toprim domain is found at 80–175; the sequence is SVVCVVQEPK…KVTRIAHGLP (96 aa).

Belongs to the RecR family.

Its function is as follows. May play a role in DNA repair. It seems to be involved in an RecBC-independent recombinational process of DNA repair. It may act with RecF and RecO. The protein is Recombination protein RecR of Bacillus anthracis (strain A0248).